We begin with the raw amino-acid sequence, 220 residues long: Deoxyribose-phosphate aldolase 1 (220 aa).

Catalysis depends on Asp-89, which acts as the Proton donor/acceptor. The active-site Schiff-base intermediate with acetaldehyde is Lys-151. The active-site Proton donor/acceptor is Lys-180.

Belongs to the DeoC/FbaB aldolase family. DeoC type 1 subfamily.

The protein resides in the cytoplasm. It catalyses the reaction 2-deoxy-D-ribose 5-phosphate = D-glyceraldehyde 3-phosphate + acetaldehyde. The protein operates within carbohydrate degradation; 2-deoxy-D-ribose 1-phosphate degradation; D-glyceraldehyde 3-phosphate and acetaldehyde from 2-deoxy-alpha-D-ribose 1-phosphate: step 2/2. Catalyzes a reversible aldol reaction between acetaldehyde and D-glyceraldehyde 3-phosphate to generate 2-deoxy-D-ribose 5-phosphate. In Staphylococcus aureus (strain MRSA252), this protein is Deoxyribose-phosphate aldolase 1.